Here is a 731-residue protein sequence, read N- to C-terminus: MKTKTYRFVCLVASVLTLQLMNGSSAATPPPPPNSKNSSTSCNRTCGGISIPFPFGIGGKDCYLNGWYEVVCNATTSGSSGTTVPFLSRINREVVNISLPEGNNEQYGVVHIKGPVTSLGCSSNTSQVPQKSLPDLNVTGKGSPYFITDENRLVAVGCGTKALMTDIESEILGCESSCKDSKSSQEVTNLLCDGYKCCQARIPVERPQAVGVNIESSGGDGCKVAFLSSKRYSPSNVTIPEQFHAGGYVVVELGWYFATTDSRFRNPLGCINLTYSGSYLSGDSCLCEYGYFSEMSYRNCYCSLGFTGNPYLRGGCIDNDDCKGPNICEEGTCVNVPGGYRCDPKPKIIKPAKPLVLQGVLLGLMGLLFLVVGTLGLIIFIKKRRRIISSRKFFKRNGGLLLKQQLTTTNDGNVDMSRLFSSEELKKATDNFSVKRVLGKGSQGTVYKGMMVDGKIIAVKRSKVVDEDKLEKFINEIILLSQINHRNIVKLIGCCLETEVPILVYEYIPNGDMFKRLHDESDDYAMTWEVRLRIAIEIAGALTYMHSAASFPIYHRDIKTTNILLDEKYGAKVSDFGTSRSVTIDQTHLTTMVAGTFGYMDPEYFLSSQYTDKSDVYSFGVVLVELITGEKPLSRIRSEEGRGLATHFLEAMKENRVIDIIDIRIKEESKLDQLMAVAKLARKCLSRKGIKRPNMREASLELERIRSSPEDLEAHIENDDEEDQVMEISRE.

Residues 1-26 (MKTKTYRFVCLVASVLTLQLMNGSSA) form the signal peptide. Residues 27 to 360 (ATPPPPPNSK…PAKPLVLQGV (334 aa)) lie on the Extracellular side of the membrane. N37, N43, N73, N96, N124, N137, N236, and N272 each carry an N-linked (GlcNAc...) asparagine glycan. Residues 285 to 342 (CLCEYGYFSEMSYRNCYCSLGFTGNPYLRGGCIDNDDCKGPNICEEGTCVNVPGGYRC) are atypical EGF-like. 3 cysteine pairs are disulfide-bonded: C287-C300, C322-C333, and C328-C342. A helical transmembrane segment spans residues 361 to 381 (LLGLMGLLFLVVGTLGLIIFI). Topologically, residues 382-731 (KKRRRIISSR…EDQVMEISRE (350 aa)) are cytoplasmic. In terms of domain architecture, Protein kinase spans 432-705 (FSVKRVLGKG…REASLELERI (274 aa)). Residues 438 to 446 (LGKGSQGTV) and K460 contribute to the ATP site. At Y505 the chain carries Phosphotyrosine. The active-site Proton acceptor is the D557. Phosphothreonine is present on residues T591 and T596. Phosphotyrosine is present on Y604. The disordered stretch occupies residues 709-731 (PEDLEAHIENDDEEDQVMEISRE).

This sequence belongs to the protein kinase superfamily. Ser/Thr protein kinase family. In terms of tissue distribution, preferentially expressed in roots and flowers.

The protein resides in the membrane. The catalysed reaction is L-seryl-[protein] + ATP = O-phospho-L-seryl-[protein] + ADP + H(+). The enzyme catalyses L-threonyl-[protein] + ATP = O-phospho-L-threonyl-[protein] + ADP + H(+). Serine/threonine-protein kinase that may function as a signaling receptor of extracellular matrix component. May be involved in plant's response to pathogen infection. The protein is Wall-associated receptor kinase-like 5 (WAKL5) of Arabidopsis thaliana (Mouse-ear cress).